A 1673-amino-acid chain; its full sequence is Glutamine and serine-rich protein 1 (1673 aa).

Disordered stretches follow at residues 265–322, 411–543, 872–892, 923–961, 1050–1081, 1149–1182, 1216–1272, and 1390–1476; these read VIPS…SSQA, DQTR…KSYV, RHMS…LSIN, QDLP…PKEG, DENA…QYSS, VIRP…KAEE, LSAL…EQLA, and KSKV…PPPI. Residues 289–309 are compositionally biased toward polar residues; the sequence is SSKTPKSQSVVSPELTQSYTK. Low complexity-rich tracts occupy residues 310–322 and 411–458; these read SSQN…SSQA and DQTR…PSDS. The span at 459 to 539 shows a compositional bias: polar residues; it reads YTSGQNQTLA…MQNSRTTADS (81 aa). The segment covering 947 to 956 has biased composition (polar residues); sequence NIKNPPNVNQ. A compositionally biased stretch (basic and acidic residues) spans 1222–1233; it reads NSEKRLKTEGDK. Polar residues-rich tracts occupy residues 1259 to 1272 and 1397 to 1411; these read KPSQ…EQLA and ARTT…SKVS. Positions 1435-1451 are enriched in basic and acidic residues; the sequence is TKAEPPPKKRKQWKEEF. The segment covering 1452–1462 has biased composition (low complexity); the sequence is SSSQSDSSPDM.

The protein resides in the chromosome. Functionally, plays an essential role in the protection and maintenance of transcriptional and developmental programs. Protects many bivalent promoters and poised enhancers from hypermethylation, showing a marked preference for these regulatory elements over other types of promoters or enhancers. Mechanistically, cooperates with tet1 and binds to DNA in a common complex to inhibit the binding of dnmt3a/3b and therefore de novo methylation. This chain is Glutamine and serine-rich protein 1 (qser1), found in Xenopus laevis (African clawed frog).